We begin with the raw amino-acid sequence, 322 residues long: Ferredoxin--NADP reductase (322 aa).

The FAD site is built by Asp34, Gln42, Tyr47, Val87, Phe120, Asp279, and Thr320.

Belongs to the ferredoxin--NADP reductase type 2 family. In terms of assembly, homodimer. FAD is required as a cofactor.

It catalyses the reaction 2 reduced [2Fe-2S]-[ferredoxin] + NADP(+) + H(+) = 2 oxidized [2Fe-2S]-[ferredoxin] + NADPH. This is Ferredoxin--NADP reductase from Streptococcus sanguinis (strain SK36).